The chain runs to 255 residues: MSQEFLARILEQKAREVEQMKLEQIQPLRQTYRLAEFLKNHQDCLQVIAEVKKASPSLGDINLDVDIVQQAQTYEENGAVMISVLTDEVFFKGHLDYLREISSQVEIPTLNKDFIIDEKQIIRARNAGATVILLIVAALSEERLKELYDYATELGLEVLVETHNLAELEVAHRLGAEIIGVNNRNLTTFEVDLQTSVDLAPYFEEGRYYISESAIFTGQDAERLAPYFNGILVGTALMQAENVVQRIKELQIDKG.

This sequence belongs to the TrpC family.

It carries out the reaction 1-(2-carboxyphenylamino)-1-deoxy-D-ribulose 5-phosphate + H(+) = (1S,2R)-1-C-(indol-3-yl)glycerol 3-phosphate + CO2 + H2O. It functions in the pathway amino-acid biosynthesis; L-tryptophan biosynthesis; L-tryptophan from chorismate: step 4/5. The protein is Indole-3-glycerol phosphate synthase of Streptococcus pneumoniae serotype 2 (strain D39 / NCTC 7466).